A 323-amino-acid polypeptide reads, in one-letter code: tRNA U34 carboxymethyltransferase (323 aa).

Residues Lys-91, Trp-105, Lys-110, Gly-130, 152–154, 181–182, Met-196, Tyr-200, and Arg-315 each bind carboxy-S-adenosyl-L-methionine; these read DPT and IE.

It belongs to the class I-like SAM-binding methyltransferase superfamily. CmoB family. Homotetramer.

The enzyme catalyses carboxy-S-adenosyl-L-methionine + 5-hydroxyuridine(34) in tRNA = 5-carboxymethoxyuridine(34) in tRNA + S-adenosyl-L-homocysteine + H(+). In terms of biological role, catalyzes carboxymethyl transfer from carboxy-S-adenosyl-L-methionine (Cx-SAM) to 5-hydroxyuridine (ho5U) to form 5-carboxymethoxyuridine (cmo5U) at position 34 in tRNAs. The sequence is that of tRNA U34 carboxymethyltransferase from Escherichia coli (strain K12 / MC4100 / BW2952).